Reading from the N-terminus, the 350-residue chain is F(420)H(2) dehydrogenase subunit H (350 aa).

8 helical membrane passes run 21–41 (GTVGLVLVGAIFLGGMAAVWI), 94–114 (VFMLTSLFLMLVAIPVGAVFI), 128–148 (ISILFIEAVSAINIFGIFMAA), 173–193 (PLGIAIVSVAVMTGSLNIIDI), 200–220 (FVWNIFLQPIGFVVFFIALMA), 261–281 (ILGSFLVALLFLGGWNVPAFV), 288–308 (GLIAPTGILLLKTVLVLMTII), and 330–350 (LLPLSLLNLAWAVGLGLYLGA).

It belongs to the complex I subunit 1 family. In terms of assembly, the FPO complex is composed of at least 13 different subunits. FpoA, FpoH, FpoJ, FpoK, FpoL, FpoM and FpoN proteins constitute the membrane sector of the complex.

The protein localises to the cell membrane. The catalysed reaction is methanophenazine + reduced coenzyme F420-(gamma-L-Glu)(n) = dihydromethanophenazine + oxidized coenzyme F420-(gamma-L-Glu)(n) + H(+). Functionally, component of the F(420)H(2) dehydrogenase (FPO complex) which is part of the energy-conserving F(420)H(2):heterodisulfide oxidoreductase system. The membrane-bound electron transfer system of the complex plays an important role in the metabolism of methylotrophic methanogens when the organisms grow on methanol or methylamines. Catalyzes the oxidation of methanophenazine to dihydromethanophenazine. It shuttles electrons from F(420)H(2), via FAD and iron-sulfur (Fe-S) centers, to methanophenazine (an electron carrier in the membrane). It couples the redox reaction to proton translocation (for every two electrons transferred, two hydrogen ions are translocated across the cytoplasmic membrane), and thus conserves the redox energy in a proton gradient. It also catalyzes the oxidation of F(420)H(2) with quinones such as 2,3-dimethyl-1,4-naphthoquinone, 2-methyl-1,4-naphthoquinone and tetramethyl-p-benzoquinone. This Methanosarcina mazei (strain ATCC BAA-159 / DSM 3647 / Goe1 / Go1 / JCM 11833 / OCM 88) (Methanosarcina frisia) protein is F(420)H(2) dehydrogenase subunit H.